A 212-amino-acid polypeptide reads, in one-letter code: ATP-dependent dethiobiotin synthetase BioD (212 aa).

13-18 contributes to the ATP binding site; the sequence is GVGKTV. A Mg(2+)-binding site is contributed by T17. K33 is an active-site residue. Residue E100 participates in Mg(2+) binding. ATP-binding positions include 100 to 103 and 184 to 186; these read EGAG and PHL.

It belongs to the dethiobiotin synthetase family. As to quaternary structure, homodimer. Requires Mg(2+) as cofactor.

Its subcellular location is the cytoplasm. It carries out the reaction (7R,8S)-7,8-diammoniononanoate + CO2 + ATP = (4R,5S)-dethiobiotin + ADP + phosphate + 3 H(+). Its pathway is cofactor biosynthesis; biotin biosynthesis; biotin from 7,8-diaminononanoate: step 1/2. Functionally, catalyzes a mechanistically unusual reaction, the ATP-dependent insertion of CO2 between the N7 and N8 nitrogen atoms of 7,8-diaminopelargonic acid (DAPA, also called 7,8-diammoniononanoate) to form a ureido ring. The chain is ATP-dependent dethiobiotin synthetase BioD from Rhodopseudomonas palustris (strain BisB5).